Here is a 469-residue protein sequence, read N- to C-terminus: Probable Xaa-Pro aminopeptidase PEPP (469 aa).

Mn(2+) contacts are provided by Asp265, Asp276, Glu399, and Glu439.

Belongs to the peptidase M24B family. The cofactor is Mn(2+).

It catalyses the reaction Release of any N-terminal amino acid, including proline, that is linked to proline, even from a dipeptide or tripeptide.. Functionally, catalyzes the removal of a penultimate prolyl residue from the N-termini of peptides. This chain is Probable Xaa-Pro aminopeptidase PEPP (PEPP), found in Coccidioides posadasii (strain RMSCC 757 / Silveira) (Valley fever fungus).